A 196-amino-acid chain; its full sequence is Interferon lambda-3 (196 aa).

The signal sequence occupies residues 1 to 21; that stretch reads MTGDCMPVLVLMAAVLTVTGA. Cystine bridges form between cysteine 37–cysteine 136, cysteine 71–cysteine 169, and cysteine 188–cysteine 195.

This sequence belongs to the lambda interferon family.

It localises to the secreted. In terms of biological role, cytokine with antiviral, antitumour and immunomodulatory activities. Plays a critical role in the antiviral host defense, predominantly in the epithelial tissues. Acts as a ligand for the heterodimeric class II cytokine receptor composed of IL10RB and IFNLR1, and receptor engagement leads to the activation of the JAK/STAT signaling pathway resulting in the expression of IFN-stimulated genes (ISG), which mediate the antiviral state. Has a restricted receptor distribution and therefore restricted targets: is primarily active in epithelial cells and this cell type-selective action is because of the epithelial cell-specific expression of its receptor IFNLR1. Seems not to be essential for early virus-activated host defense in vaginal infection, but plays an important role in Toll-like receptor (TLR)-induced antiviral defense. Plays a significant role in the antiviral immune defense in the intestinal epithelium. Exerts an immunomodulatory effect by up-regulating MHC class I antigen expression. The chain is Interferon lambda-3 (IFNL3) from Homo sapiens (Human).